The following is a 143-amino-acid chain: MASVLLPQLRTGWHVDQAIVTETKRLVVIRFGRKNDRQCMIMDELLSSIAERVRNFAVIYLCDIDEVSDFDEMYELTDPMTVMFFYHNKHMMCDFGTGNNNKLNFIVDDKQEMIDILETIFRGARKNKGLVVSPYDYNHKRVS.

A2 is modified (N-acetylalanine).

The protein belongs to the DIM1 family. As to quaternary structure, component of the U4/U6-U5 tri-snRNP complex composed of the U4, U6 and U5 snRNAs and at least PRP3, PRP4, PRP6, PRP8, PRP18, PRP31, PRP38, SNU13, SNU23, SNU66, SNU114, SPP381, SMB1, SMD1, SMD2, SMD3, SMX2, SMX3, LSM2, LSM3, LSM4, LSM5, LSM6, LSM7, LSM8, BRR2 and DIB1.

The protein localises to the nucleus. Its function is as follows. Essential role in pre-mRNA splicing. Also essential for entry into mitosis (G2/M progression) as well as for chromosome segregation during mitosis. This Saccharomyces cerevisiae (strain ATCC 204508 / S288c) (Baker's yeast) protein is Spliceosomal protein DIB1 (DIB1).